The primary structure comprises 431 residues: Adenylosuccinate synthetase (431 aa).

GTP is bound by residues Gly-12–Lys-18 and Gly-40–Thr-42. Asp-13 acts as the Proton acceptor in catalysis. Asp-13 and Gly-40 together coordinate Mg(2+). Residues Asp-13 to Lys-16, Asn-38 to His-41, Thr-131, Arg-145, Gln-225, Thr-240, and Arg-304 contribute to the IMP site. The active-site Proton donor is His-41. Residue Val-300–Arg-306 coordinates substrate. GTP is bound by residues Arg-306, Lys-332–Asp-334, and Ser-414–Ser-416.

This sequence belongs to the adenylosuccinate synthetase family. In terms of assembly, homodimer. It depends on Mg(2+) as a cofactor.

The protein localises to the cytoplasm. The enzyme catalyses IMP + L-aspartate + GTP = N(6)-(1,2-dicarboxyethyl)-AMP + GDP + phosphate + 2 H(+). Its pathway is purine metabolism; AMP biosynthesis via de novo pathway; AMP from IMP: step 1/2. Functionally, plays an important role in the de novo pathway of purine nucleotide biosynthesis. Catalyzes the first committed step in the biosynthesis of AMP from IMP. In Rhizobium rhizogenes (strain K84 / ATCC BAA-868) (Agrobacterium radiobacter), this protein is Adenylosuccinate synthetase.